The chain runs to 610 residues: MNIEDLKKRQEKIRNFSIIAHIDHGKSTLADRILEKTETVSSREMQAQLLDSMDLERERGITIKLNAIELNYTAKDGETYIFHLIDTPGHVDFTYEVSRSLAACEGAILVVDAAQGIEAQTLANVYLALDNDLEILPVINKIDLPAADPERVRAEVEDVIGLDASEAVLASAKAGIGIEEILEQIVEKVPAPTGEVDAPLQALIFDSVYDAYRGVILQVRIVNGMVKPGDKIQMMSNGKTFDVTEVGIFTPKAVGRDFLATGDVGYIAASIKTVADTRVGDTITLANNPAIEPLHGYKQMNPMVFAGLYPIESNKYNDLREALEKLQLNDASLQFEPETSQALGFGFRCGFLGLLHMDVIQERLEREFNIDLIMTAPSVVYHVNTTDGEMLEVSNPSEFPDPTRVDSIEEPYVKAQIMVPQEFVGAVMELAQRKRGDFVTMDYIDDNRVNVIYQIPLAEIVFDFFDKLKSSTRGYASFDYEISEYRRSQLVKMDILLNGDKVDALSFIVHKEFAYERGKLIVDKLKKIIPRQQFEVPIQAAIGQKIVARSDIKALRKNVLAKCYGGDVSRKRKLLEKQKAGKKRMKAIGSVEVPQEAFLSVLSMDDDDKK.

The 183-residue stretch at glutamate 11–threonine 193 folds into the tr-type G domain. GTP is bound by residues aspartate 23–threonine 28 and asparagine 140–aspartate 143.

The protein belongs to the TRAFAC class translation factor GTPase superfamily. Classic translation factor GTPase family. LepA subfamily.

Its subcellular location is the cell membrane. It catalyses the reaction GTP + H2O = GDP + phosphate + H(+). Functionally, required for accurate and efficient protein synthesis under certain stress conditions. May act as a fidelity factor of the translation reaction, by catalyzing a one-codon backward translocation of tRNAs on improperly translocated ribosomes. Back-translocation proceeds from a post-translocation (POST) complex to a pre-translocation (PRE) complex, thus giving elongation factor G a second chance to translocate the tRNAs correctly. Binds to ribosomes in a GTP-dependent manner. This is Elongation factor 4 from Streptococcus agalactiae serotype Ia (strain ATCC 27591 / A909 / CDC SS700).